We begin with the raw amino-acid sequence, 169 residues long: Putative cysteine protease YraA (169 aa).

A PfpI endopeptidase domain is found at 3 to 169; sequence KKIAVLVTDQ…FNRESLNLLK (167 aa). The Nucleophile role is filled by cysteine 103. Residue histidine 104 is part of the active site.

It belongs to the peptidase C56 family.

Functionally, functions in the protection against aldehyde-stress, possibly by degrading damaged proteins. This is Putative cysteine protease YraA (yraA) from Bacillus subtilis (strain 168).